Reading from the N-terminus, the 86-residue chain is Small ribosomal subunit protein bS18 (86 aa).

The protein belongs to the bacterial ribosomal protein bS18 family. As to quaternary structure, part of the 30S ribosomal subunit. Forms a tight heterodimer with protein bS6.

In terms of biological role, binds as a heterodimer with protein bS6 to the central domain of the 16S rRNA, where it helps stabilize the platform of the 30S subunit. This Campylobacter jejuni subsp. jejuni serotype O:6 (strain 81116 / NCTC 11828) protein is Small ribosomal subunit protein bS18.